Reading from the N-terminus, the 80-residue chain is 17 kDa surface antigen (80 aa).

The span at 47-58 shows a compositional bias: polar residues; the sequence is ALETTPSGTSIE. The interval 47–80 is disordered; that stretch reads ALETTPSGTSIEWRNPDNGNYGYVTPSKTYKNST.

Belongs to the rickettsiale 17 kDa surface antigen family.

It is found in the cell outer membrane. The chain is 17 kDa surface antigen (omp) from Rickettsia canadensis.